The primary structure comprises 38 residues: Large ribosomal subunit protein bL36 (38 aa).

The protein belongs to the bacterial ribosomal protein bL36 family.

This is Large ribosomal subunit protein bL36 from Cupriavidus metallidurans (strain ATCC 43123 / DSM 2839 / NBRC 102507 / CH34) (Ralstonia metallidurans).